Reading from the N-terminus, the 215-residue chain is UPF0173 metal-dependent hydrolase NEQ378 (215 aa).

It belongs to the UPF0173 family.

The sequence is that of UPF0173 metal-dependent hydrolase NEQ378 from Nanoarchaeum equitans (strain Kin4-M).